Reading from the N-terminus, the 438-residue chain is Aspartate--tRNA(Asp/Asn) ligase (438 aa).

Residue glutamate 176 participates in L-aspartate binding. Residues glutamine 198–lysine 201 are aspartate. Residue arginine 220 participates in L-aspartate binding. Residues arginine 220–glutamate 222, arginine 228–leucine 230, and glutamate 361 contribute to the ATP site. Mg(2+) contacts are provided by glutamate 361 and serine 364. Serine 364 and arginine 368 together coordinate L-aspartate. Glycine 409 to arginine 412 serves as a coordination point for ATP.

Belongs to the class-II aminoacyl-tRNA synthetase family. Type 2 subfamily. Homodimer. It depends on Mg(2+) as a cofactor.

The protein localises to the cytoplasm. The enzyme catalyses tRNA(Asx) + L-aspartate + ATP = L-aspartyl-tRNA(Asx) + AMP + diphosphate. Functionally, aspartyl-tRNA synthetase with relaxed tRNA specificity since it is able to aspartylate not only its cognate tRNA(Asp) but also tRNA(Asn). Reaction proceeds in two steps: L-aspartate is first activated by ATP to form Asp-AMP and then transferred to the acceptor end of tRNA(Asp/Asn). The chain is Aspartate--tRNA(Asp/Asn) ligase from Methanococcus aeolicus (strain ATCC BAA-1280 / DSM 17508 / OCM 812 / Nankai-3).